The sequence spans 363 residues: Mitogen-activated protein kinase kinase 2 (363 aa).

Serine 56 bears the Phosphoserine mark. Residues 70-330 (LDMVKVIGKG…AKELMEHPFL (261 aa)) enclose the Protein kinase domain. Residues 76–84 (IGKGSSGVV) and lysine 99 contribute to the ATP site. Residue aspartate 192 is the Proton acceptor of the active site. Threonine 220, threonine 226, and threonine 230 each carry phosphothreonine.

Belongs to the protein kinase superfamily. STE Ser/Thr protein kinase family. MAP kinase kinase subfamily. In terms of assembly, interacts with MEKK1, MPK4 and MPK6. May form a ternary complex composed of MEKK1 and MKK1/MKK2 and MPK4. Interacts with MPK10 and MPK11. Interacts with MAPKKK5 mainly in the cytosol. In terms of processing, phosphorylation at Thr-220 and Thr-226 by MAP kinase kinase kinases positively regulates kinase activity. Phosphorylated by MEKK1 in response to cold. Phosphorylated by MAPKKK5.

The catalysed reaction is L-seryl-[protein] + ATP = O-phospho-L-seryl-[protein] + ADP + H(+). It carries out the reaction L-threonyl-[protein] + ATP = O-phospho-L-threonyl-[protein] + ADP + H(+). It catalyses the reaction L-tyrosyl-[protein] + ATP = O-phospho-L-tyrosyl-[protein] + ADP + H(+). Activated in response to cold and salt stresses through serine and threonine phosphorylation by MEKK1. In terms of biological role, MEKK1, MKK1/MKK2 and MPK4 function in a signaling pathway that modulates the expression of genes responding to biotic and abiotic stresses and also plays an important role in pathogen defense by negatively regulating innate immunity. Plays a role in abiotic stress tolerance and plant disease resistance through activation of MPK4 and MPK6 by phosphorylation. Acts redundantly with MKK1. The chain is Mitogen-activated protein kinase kinase 2 (MKK2) from Arabidopsis thaliana (Mouse-ear cress).